The primary structure comprises 148 residues: Snaclec convulxin subunit beta (148 aa).

The first 23 residues, 1–23 (MGRFIFVSFGLLVVFLSLSGSEA), serve as a signal peptide directing secretion. 3 disulfide bridges follow: Cys27/Cys38, Cys55/Cys144, and Cys121/Cys136. Residues 34-148 (YDRYCYKVFK…TYSFVCKFEA (115 aa)) enclose the C-type lectin domain.

Belongs to the snaclec family. In terms of assembly, tetramer of heterodimers of alpha and beta subunits (alphabeta)(4); disulfide-linked. Expressed by the venom gland.

It is found in the secreted. Functionally, snake venom lectin that activates platelets by binding to the platelet collagen receptor glycoprotein VI (GP6). The indirect activation of integrin alpha-IIb/beta-3 (ITGA2B/ITGB3) also induced by the toxin is upstream the cytoskeletal translocation of GPIb, FcRgamma (FCER1G) and 14-3-3zeta (YWHAZ). This is Snaclec convulxin subunit beta from Crotalus durissus terrificus (South American rattlesnake).